Reading from the N-terminus, the 635-residue chain is Glutamyl-tRNA(Gln) amidotransferase subunit E (635 aa).

The tract at residues 415 to 437 (LPDGNTEYMRPLPGKARMYPETD) is disordered.

This sequence belongs to the GatB/GatE family. GatE subfamily. Heterodimer of GatD and GatE.

The enzyme catalyses L-glutamyl-tRNA(Gln) + L-glutamine + ATP + H2O = L-glutaminyl-tRNA(Gln) + L-glutamate + ADP + phosphate + H(+). Functionally, allows the formation of correctly charged Gln-tRNA(Gln) through the transamidation of misacylated Glu-tRNA(Gln) in organisms which lack glutaminyl-tRNA synthetase. The reaction takes place in the presence of glutamine and ATP through an activated gamma-phospho-Glu-tRNA(Gln). The GatDE system is specific for glutamate and does not act on aspartate. The sequence is that of Glutamyl-tRNA(Gln) amidotransferase subunit E from Pyrococcus horikoshii (strain ATCC 700860 / DSM 12428 / JCM 9974 / NBRC 100139 / OT-3).